A 172-amino-acid chain; its full sequence is Large ribosomal subunit protein bL17 (172 aa).

A disordered region spans residues 127–172 (KAAKQDRAKRVKGSKKVTGDVAPAVAPVPSAPAETQEEAKAPESAE). Residues 147–159 (VAPAVAPVPSAPA) are compositionally biased toward low complexity. The segment covering 163–172 (EEAKAPESAE) has biased composition (basic and acidic residues).

This sequence belongs to the bacterial ribosomal protein bL17 family. Part of the 50S ribosomal subunit. Contacts protein L32.

This chain is Large ribosomal subunit protein bL17, found in Chlorobium luteolum (strain DSM 273 / BCRC 81028 / 2530) (Pelodictyon luteolum).